We begin with the raw amino-acid sequence, 46 residues long: Large ribosomal subunit protein bL34c (46 aa).

The segment at 1 to 46 is disordered; it reads MSKRTLEGSHRKKVRKSGFLSRSQSPTGRRILKARRKKGRKMLVKY. Residues 30-46 show a composition bias toward basic residues; that stretch reads RILKARRKKGRKMLVKY.

This sequence belongs to the bacterial ribosomal protein bL34 family.

The protein resides in the plastid. Its subcellular location is the cyanelle. The polypeptide is Large ribosomal subunit protein bL34c (rpl34) (Cyanophora paradoxa).